Here is a 209-residue protein sequence, read N- to C-terminus: Large ribosomal subunit protein bL25 (209 aa).

Belongs to the bacterial ribosomal protein bL25 family. CTC subfamily. Part of the 50S ribosomal subunit; part of the 5S rRNA/L5/L18/L25 subcomplex. Contacts the 5S rRNA. Binds to the 5S rRNA independently of L5 and L18.

In terms of biological role, this is one of the proteins that binds to the 5S RNA in the ribosome where it forms part of the central protuberance. In Xanthomonas campestris pv. campestris (strain B100), this protein is Large ribosomal subunit protein bL25.